A 218-amino-acid polypeptide reads, in one-letter code: Vacuolar protein-sorting-associated protein 37 homolog 2 (218 aa).

The segment at 1–51 (MFNFWGSKEQQQGQSRPSPEASATPWYSPSLVTSPSSSRPQTSGQIPSHVS) is disordered. Residues 8–17 (KEQQQGQSRP) are compositionally biased toward polar residues. Residues 28–40 (SPSLVTSPSSSRP) are compositionally biased toward low complexity. One can recognise a VPS37 C-terminal domain in the interval 137–218 (QEKLNELENQ…HLAAKTSSIG (82 aa)).

The protein belongs to the VPS37 family. In terms of assembly, component of the endosomal sorting required for transport complex I (ESCRT-I), composed of ELC, VPS28 and VPS37. Interacts with ELC.

The protein localises to the endosome. Its function is as follows. Component of the ESCRT-I complex (endosomal sorting complex required for transport I), a regulator of vesicular trafficking process. Required for the sorting of endocytic ubiquitinated cargos into multivesicular bodies (MVBs). This is Vacuolar protein-sorting-associated protein 37 homolog 2 (VPS37-2) from Arabidopsis thaliana (Mouse-ear cress).